The sequence spans 110 residues: UPF0122 protein SGO_1122 (110 aa).

The protein belongs to the UPF0122 family.

Might take part in the signal recognition particle (SRP) pathway. This is inferred from the conservation of its genetic proximity to ftsY/ffh. May be a regulatory protein. The protein is UPF0122 protein SGO_1122 of Streptococcus gordonii (strain Challis / ATCC 35105 / BCRC 15272 / CH1 / DL1 / V288).